Consider the following 340-residue polypeptide: DRTIWPKKGFSIYWNIPTHFCHNFGVYFKELKQFNIKYNSMNNFRGETISLFYDPGNFPSMVLLKNGTYEIRNEGVPQKGNLTIHLEQFTKELDEIYPKKIAGGIGVIHFHNWRPIFRRNVDNLKINKDISIDLVRKEHPKWDKSMIEKEASNRFETSAKIFMEKTLKLAKEIRKKTEWGYHGYPHCLSGSTDKPSFDCDALSMSENDKMSWLFNNQNVLLPSIYLKNVLKPDEKIHLVQERLKEAIRISKNFKHLPKVLPYWWYTYQDKESIFLTEADVKNTFKEILTNGADGIIIWGVSYELTDRKRCEKLKEYLMKILGPIAFKVTKAVKENTPLNF.

2 cysteine pairs are disulfide-bonded: C21–C310 and C187–C199. N-linked (GlcNAc...) asparagine glycosylation is found at N66 and N81.

It belongs to the glycosyl hydrolase 56 family. In terms of processing, N-glycosylated on at least two Asn residues by identical heptasaccharide units composed of Man, GlcNAc, and Fuc residues in the molar ration of 3:2:2. As to expression, expressed by the venom gland.

It is found in the secreted. In terms of biological role, has no hyaluronidase activity. This Vespula vulgaris (Yellow jacket) protein is Inactive hyaluronidase B.